The primary structure comprises 261 residues: MVVVSVPAEVTVILLDIEGTTTPIAFVKDILFPYIKENVKEYLQTHWEEEECQQDVSLLRKQAEEDAHLDGAVPIPVASGGDVQQMIQAVVDNVSWQMSHDRKTTALKQLQGHMWKAAFTAGRMKAEVFADVVPAVRRWREAGMKVYIYSSGSVEAQKLLFGHSTEGDILELIDGHFDTKIGHKVESDSYRKIADSIGCSTNNILFLTDVTVEASAAEEADVHVAVVVRPGNAGLTDDEKTYYNLISSFSELYLPSTQSKV.

Mg(2+) is bound by residues aspartate 16 and glutamate 18. Residues 150–151 and lysine 184 contribute to the substrate site; that span reads SS. Aspartate 209 provides a ligand contact to Mg(2+).

The protein belongs to the HAD-like hydrolase superfamily. MasA/MtnC family. In terms of assembly, monomer. The cofactor is Mg(2+).

The protein localises to the cytoplasm. The protein resides in the nucleus. The catalysed reaction is 5-methylsulfanyl-2,3-dioxopentyl phosphate + H2O = 1,2-dihydroxy-5-(methylsulfanyl)pent-1-en-3-one + phosphate. It functions in the pathway amino-acid biosynthesis; L-methionine biosynthesis via salvage pathway; L-methionine from S-methyl-5-thio-alpha-D-ribose 1-phosphate: step 3/6. The protein operates within amino-acid biosynthesis; L-methionine biosynthesis via salvage pathway; L-methionine from S-methyl-5-thio-alpha-D-ribose 1-phosphate: step 4/6. Bifunctional enzyme that catalyzes the enolization of 2,3-diketo-5-methylthiopentyl-1-phosphate (DK-MTP-1-P) into the intermediate 2-hydroxy-3-keto-5-methylthiopentenyl-1-phosphate (HK-MTPenyl-1-P), which is then dephosphorylated to form the acireductone 1,2-dihydroxy-3-keto-5-methylthiopentene (DHK-MTPene). This chain is Enolase-phosphatase E1 (Enoph1), found in Rattus norvegicus (Rat).